A 93-amino-acid polypeptide reads, in one-letter code: Cell division topological specificity factor (93 aa).

The protein belongs to the MinE family.

In terms of biological role, prevents the cell division inhibition by proteins MinC and MinD at internal division sites while permitting inhibition at polar sites. This ensures cell division at the proper site by restricting the formation of a division septum at the midpoint of the long axis of the cell. The protein is Cell division topological specificity factor of Halorhodospira halophila (strain DSM 244 / SL1) (Ectothiorhodospira halophila (strain DSM 244 / SL1)).